A 383-amino-acid polypeptide reads, in one-letter code: Chaperone protein DnaJ (383 aa).

One can recognise a J domain in the interval 5-70 (DYYEALGVAR…QKRAAYDQFG (66 aa)). The CR-type zinc finger occupies 139–217 (GTEVQIRVPT…CGGRGRVQSQ (79 aa)). Zn(2+) contacts are provided by cysteine 152, cysteine 155, cysteine 169, cysteine 172, cysteine 191, cysteine 194, cysteine 205, and cysteine 208. CXXCXGXG motif repeat units lie at residues 152–159 (CDACDGKG), 169–176 (CPTCKGHG), 191–198 (CPRCGGSG), and 205–212 (CRKCGGRG). The tract at residues 230-249 (TGDRIRLSGEGEPGENGGPP) is disordered.

The protein belongs to the DnaJ family. In terms of assembly, homodimer. Requires Zn(2+) as cofactor.

It is found in the cytoplasm. Functionally, participates actively in the response to hyperosmotic and heat shock by preventing the aggregation of stress-denatured proteins and by disaggregating proteins, also in an autonomous, DnaK-independent fashion. Unfolded proteins bind initially to DnaJ; upon interaction with the DnaJ-bound protein, DnaK hydrolyzes its bound ATP, resulting in the formation of a stable complex. GrpE releases ADP from DnaK; ATP binding to DnaK triggers the release of the substrate protein, thus completing the reaction cycle. Several rounds of ATP-dependent interactions between DnaJ, DnaK and GrpE are required for fully efficient folding. Also involved, together with DnaK and GrpE, in the DNA replication of plasmids through activation of initiation proteins. In Alkalilimnicola ehrlichii (strain ATCC BAA-1101 / DSM 17681 / MLHE-1), this protein is Chaperone protein DnaJ.